Reading from the N-terminus, the 507-residue chain is Cyclin-dependent kinase-like 2 (507 aa).

The 286-residue stretch at 4 to 289 (YENLGLVGEG…CADLLHHDFF (286 aa)) folds into the Protein kinase domain. ATP-binding positions include 10–18 (VGEGSYGMV) and Lys33. The [NKR]KIAxRE signature appears at 45–51 (KKIAMRE). Asp126 acts as the Proton acceptor in catalysis. The segment at 365-392 (KTEKGTRASNGSCLHDNGTSHKGLSSTS) is disordered.

Belongs to the protein kinase superfamily. CMGC Ser/Thr protein kinase family. CDC2/CDKX subfamily.

The protein resides in the cytoplasm. Its subcellular location is the nucleus. It catalyses the reaction L-seryl-[protein] + ATP = O-phospho-L-seryl-[protein] + ADP + H(+). It carries out the reaction L-threonyl-[protein] + ATP = O-phospho-L-threonyl-[protein] + ADP + H(+). This chain is Cyclin-dependent kinase-like 2, found in Rattus norvegicus (Rat).